Here is an 83-residue protein sequence, read N- to C-terminus: Large ribosomal subunit protein eL14 (83 aa).

Belongs to the eukaryotic ribosomal protein eL14 family. Part of the 50S ribosomal subunit.

The sequence is that of Large ribosomal subunit protein eL14 from Thermococcus kodakarensis (strain ATCC BAA-918 / JCM 12380 / KOD1) (Pyrococcus kodakaraensis (strain KOD1)).